A 379-amino-acid chain; its full sequence is Cytochrome b (379 aa).

The next 4 membrane-spanning stretches (helical) occupy residues 34 to 54, 78 to 99, 114 to 134, and 179 to 199; these read FGSLLGICLITQILTGLLLAM, WLIRNLHANGASFFFICIYLHI, WNTGVVLLLTLMATAFVGYVL, and FFALHFLLPFLIAGITLIHLT. Residues His84 and His98 each coordinate heme b. Heme b is bound by residues His183 and His197. His202 serves as a coordination point for a ubiquinone. 4 helical membrane passes run 227–247, 289–309, 321–341, and 348–368; these read LKDALGFALMFIPLLTLAFFS, LGGVLALAASVLILFLIPFLH, LSQILFWLLVANLLILTWIGS, and FIIIGQMASFSYFLILLVLFP.

Belongs to the cytochrome b family. As to quaternary structure, the cytochrome bc1 complex contains 11 subunits: 3 respiratory subunits (MT-CYB, CYC1 and UQCRFS1), 2 core proteins (UQCRC1 and UQCRC2) and 6 low-molecular weight proteins (UQCRH/QCR6, UQCRB/QCR7, UQCRQ/QCR8, UQCR10/QCR9, UQCR11/QCR10 and a cleavage product of UQCRFS1). This cytochrome bc1 complex then forms a dimer. It depends on heme b as a cofactor.

It is found in the mitochondrion inner membrane. Its function is as follows. Component of the ubiquinol-cytochrome c reductase complex (complex III or cytochrome b-c1 complex) that is part of the mitochondrial respiratory chain. The b-c1 complex mediates electron transfer from ubiquinol to cytochrome c. Contributes to the generation of a proton gradient across the mitochondrial membrane that is then used for ATP synthesis. This is Cytochrome b (MT-CYB) from Rhea americana (Greater rhea).